We begin with the raw amino-acid sequence, 435 residues long: Histidinol dehydrogenase (435 aa).

Positions 131, 189, and 212 each coordinate NAD(+). Residues Ser-238, Gln-260, and His-263 each coordinate substrate. Zn(2+)-binding residues include Gln-260 and His-263. Catalysis depends on proton acceptor residues Glu-327 and His-328. 4 residues coordinate substrate: His-328, Asp-361, Glu-415, and His-420. Zn(2+) is bound at residue Asp-361. His-420 contacts Zn(2+).

It belongs to the histidinol dehydrogenase family. As to quaternary structure, homodimer. The cofactor is Zn(2+).

The catalysed reaction is L-histidinol + 2 NAD(+) + H2O = L-histidine + 2 NADH + 3 H(+). Its pathway is amino-acid biosynthesis; L-histidine biosynthesis; L-histidine from 5-phospho-alpha-D-ribose 1-diphosphate: step 9/9. Its function is as follows. Catalyzes the sequential NAD-dependent oxidations of L-histidinol to L-histidinaldehyde and then to L-histidine. The protein is Histidinol dehydrogenase (hisD) of Buchnera aphidicola subsp. Acyrthosiphon pisum (strain APS) (Acyrthosiphon pisum symbiotic bacterium).